The sequence spans 350 residues: Protein-glutamate methylesterase/protein-glutamine glutaminase (350 aa).

Residues 5–122 (KVLCVDDSAL…RDGLIEYSEV (118 aa)) enclose the Response regulatory domain. Residue D56 is modified to 4-aspartylphosphate. The CheB-type methylesterase domain occupies 152 to 346 (PFASSEKLVI…ERILTRLGDR (195 aa)). Catalysis depends on residues S165, H191, and D288.

The protein belongs to the CheB family. Phosphorylated by CheA. Phosphorylation of the N-terminal regulatory domain activates the methylesterase activity.

The protein localises to the cytoplasm. The catalysed reaction is [protein]-L-glutamate 5-O-methyl ester + H2O = L-glutamyl-[protein] + methanol + H(+). The enzyme catalyses L-glutaminyl-[protein] + H2O = L-glutamyl-[protein] + NH4(+). Its function is as follows. Involved in chemotaxis. Part of a chemotaxis signal transduction system that modulates chemotaxis in response to various stimuli. Catalyzes the demethylation of specific methylglutamate residues introduced into the chemoreceptors (methyl-accepting chemotaxis proteins or MCP) by CheR. Also mediates the irreversible deamidation of specific glutamine residues to glutamic acid. The chain is Protein-glutamate methylesterase/protein-glutamine glutaminase from Bordetella bronchiseptica (strain ATCC BAA-588 / NCTC 13252 / RB50) (Alcaligenes bronchisepticus).